Consider the following 92-residue polypeptide: Large ribosomal subunit protein uL23c (92 aa).

Belongs to the universal ribosomal protein uL23 family. In terms of assembly, part of the 50S ribosomal subunit.

Its subcellular location is the plastid. It localises to the chloroplast. Functionally, binds to 23S rRNA. The polypeptide is Large ribosomal subunit protein uL23c (rpl23) (Mesostigma viride (Green alga)).